A 303-amino-acid chain; its full sequence is tRNA pseudouridine synthase B (303 aa).

Aspartate 46 acts as the Nucleophile in catalysis.

This sequence belongs to the pseudouridine synthase TruB family. Type 1 subfamily.

The catalysed reaction is uridine(55) in tRNA = pseudouridine(55) in tRNA. Functionally, responsible for synthesis of pseudouridine from uracil-55 in the psi GC loop of transfer RNAs. The chain is tRNA pseudouridine synthase B from Hydrogenovibrio crunogenus (strain DSM 25203 / XCL-2) (Thiomicrospira crunogena).